A 456-amino-acid polypeptide reads, in one-letter code: tRNA modification GTPase MnmE (456 aa).

(6S)-5-formyl-5,6,7,8-tetrahydrofolate contacts are provided by R23, E80, and K122. The TrmE-type G domain maps to 218–380 (AKRIVIVGPP…LKKHLSNRQK (163 aa)). Position 228 (N228) interacts with K(+). GTP-binding positions include 228–233 (NAGKSS), 247–253 (TDLPGTT), and 272–275 (DTAG). S232 is a binding site for Mg(2+). Positions 247, 249, and 252 each coordinate K(+). T253 is a Mg(2+) binding site. K456 lines the (6S)-5-formyl-5,6,7,8-tetrahydrofolate pocket.

Belongs to the TRAFAC class TrmE-Era-EngA-EngB-Septin-like GTPase superfamily. TrmE GTPase family. As to quaternary structure, homodimer. Heterotetramer of two MnmE and two MnmG subunits. K(+) serves as cofactor.

Its subcellular location is the cytoplasm. In terms of biological role, exhibits a very high intrinsic GTPase hydrolysis rate. Involved in the addition of a carboxymethylaminomethyl (cmnm) group at the wobble position (U34) of certain tRNAs, forming tRNA-cmnm(5)s(2)U34. This Buchnera aphidicola subsp. Schizaphis graminum (strain Sg) protein is tRNA modification GTPase MnmE.